The sequence spans 119 residues: Large ribosomal subunit protein uL18 (119 aa).

This sequence belongs to the universal ribosomal protein uL18 family. In terms of assembly, part of the 50S ribosomal subunit; part of the 5S rRNA/L5/L18/L25 subcomplex. Contacts the 5S and 23S rRNAs.

Its function is as follows. This is one of the proteins that bind and probably mediate the attachment of the 5S RNA into the large ribosomal subunit, where it forms part of the central protuberance. In Xanthomonas oryzae pv. oryzae (strain PXO99A), this protein is Large ribosomal subunit protein uL18.